A 258-amino-acid chain; its full sequence is Cholera enterotoxin subunit A (258 aa).

The signal sequence occupies residues 1–18 (MVKIIFVFFIFLSSFSYA). Residues 25–28 (RADS) and 41–43 (MPR) each bind NAD(+). The active site involves Glu-130. An intrachain disulfide couples Cys-205 to Cys-217.

It belongs to the enterotoxin A family. As to quaternary structure, the holotoxin (choleragen) consists of a pentameric ring of B subunits whose central pore is occupied by the A subunit. The A subunit contains two chains, A1 and A2, linked by a disulfide bridge. Interaction with the host protein ARF6 causes a conformation change so that the enterotoxin subunit A1 can bind NAD and catalyze the ADP-ribosylation of the host Gs alpha.

In terms of biological role, the A1 chain catalyzes the ADP-ribosylation of Gs alpha, a GTP-binding regulatory protein, to activate the adenylate cyclase. This leads to an overproduction of cAMP and eventually to a hypersecretion of chloride and bicarbonate followed by water, resulting in the characteristic cholera stool. The A2 chain tethers A1 to the pentameric ring. The sequence is that of Cholera enterotoxin subunit A (ctxA) from Vibrio cholerae serotype O1 (strain ATCC 39315 / El Tor Inaba N16961).